Reading from the N-terminus, the 637-residue chain is Phosphomethylpyrimidine synthase (637 aa).

Substrate contacts are provided by residues N242, M271, Y300, H336, 356 to 358 (SRG), 397 to 400 (DGLR), and E436. H440 provides a ligand contact to Zn(2+). Residue Y463 participates in substrate binding. A Zn(2+)-binding site is contributed by H504. Positions 584, 587, and 592 each coordinate [4Fe-4S] cluster.

Belongs to the ThiC family. As to quaternary structure, homodimer. It depends on [4Fe-4S] cluster as a cofactor.

The enzyme catalyses 5-amino-1-(5-phospho-beta-D-ribosyl)imidazole + S-adenosyl-L-methionine = 4-amino-2-methyl-5-(phosphooxymethyl)pyrimidine + CO + 5'-deoxyadenosine + formate + L-methionine + 3 H(+). It participates in cofactor biosynthesis; thiamine diphosphate biosynthesis. Catalyzes the synthesis of the hydroxymethylpyrimidine phosphate (HMP-P) moiety of thiamine from aminoimidazole ribotide (AIR) in a radical S-adenosyl-L-methionine (SAM)-dependent reaction. This chain is Phosphomethylpyrimidine synthase, found in Herminiimonas arsenicoxydans.